A 2813-amino-acid chain; its full sequence is A-kinase anchor protein 13 (2813 aa).

Disordered stretches follow at residues 304–400 and 415–439; these read AQDP…QDSC and LSSC…QESL. Residues 427-439 are compositionally biased toward polar residues; sequence TKSSGMPTDQESL. The tract at residues 494–516 is important for interaction with PRKAR2A; that stretch reads WKNVLQGGESTKERFENSNIGTA. Disordered regions lie at residues 539–585, 632–653, and 690–726; these read AASS…VDQN, HQNS…SPIC, and SEST…RDTQ. Residues 561–577 show a composition bias toward basic and acidic residues; the sequence is STEKTAETETSRSREES. The span at 690-702 shows a compositional bias: polar residues; that stretch reads SESTTARQPSSQD. Position 790 is a phosphoserine (serine 790). Disordered regions lie at residues 805-856 and 939-965; these read VPSQ…AAEL and ENAL…QFHE. Threonine 815 carries the phosphothreonine modification. Positions 835–844 are enriched in basic and acidic residues; that stretch reads PDTRPLEDRA. Polar residues-rich tracts occupy residues 847–856 and 939–948; these read LSTSSTAAEL and ENALSSGTLQ. Threonine 953 bears the Phosphothreonine mark. Position 983 is a phosphoserine (serine 983). 2 disordered regions span residues 1431-1455 and 1467-1542; these read GVLK…DSII and DITG…DSIT. Residues 1467–1478 show a composition bias toward low complexity; sequence DITGSSSSTDDT. The segment covering 1488–1497 has biased composition (polar residues); sequence GSDVSLSQIL. Phosphoserine occurs at positions 1489, 1507, 1540, 1565, and 1602. Over residues 1525 to 1540 the composition is skewed to acidic residues; the sequence is SEPADPGDVEEEEMDS. Residues 1585-1715 form an important for interaction with MAP2K3 region; it reads RVLGDVVRRP…HSTFHNTSAN (131 aa). The interval 1601-1638 is disordered; that stretch reads FSLEGLTGGAGVGNKPSSSLEVSSANAEELRHPFSGEE. A compositionally biased stretch (polar residues) spans 1615 to 1626; sequence KPSSSLEVSSAN. The segment covering 1628–1638 has biased composition (basic and acidic residues); sequence EELRHPFSGEE. Phosphoserine occurs at positions 1642, 1645, and 1647. Lysine 1670 carries the post-translational modification N6-methyllysine. The interval 1755-1793 is disordered; that stretch reads KMSSSKKSKEKEKEKDKIKEKEKDSKDKEKDKKTVNGHT. Positions 1758 to 1790 form a coiled coil; the sequence is SSKKSKEKEKEKDKIKEKEKDSKDKEKDKKTVN. Residues 1761–1788 are compositionally biased toward basic and acidic residues; that stretch reads KSKEKEKEKDKIKEKEKDSKDKEKDKKT. The Phorbol-ester/DAG-type zinc-finger motif lies at 1791–1838; that stretch reads GHTFSSIPVVGPISCSQCMKPFTNKDAYTCANCSAFVHKGCRESLASC. Phosphoserine is present on residues serine 1876, serine 1895, and serine 1929. The tract at residues 1919–2813 is interaction with ESR1; sequence MSNTWKFLSH…VSAEGEEIFC (895 aa). At threonine 1930 the chain carries Phosphothreonine. 2 positions are modified to phosphoserine: serine 1932 and serine 1945. The DH domain occupies 1994–2191; sequence KRQEVIYELM…KDVIGAVDSK (198 aa). One can recognise a PH domain in the interval 2231 to 2333; the sequence is KLVRDGSVFL…WIQIIQDTIN (103 aa). Residues serine 2345 and serine 2398 each carry the phosphoserine modification. A coiled-coil region spans residues 2345–2381; sequence SENEEEKKMLDTRARELKEQLHQKDQKILLLLEEKEM. The disordered stretch occupies residues 2466 to 2502; it reads ETFGGFDSHQMNASKGGEKEEGDDGQDLRRTESDSGL. At threonine 2467 the chain carries Phosphothreonine. Serine 2473 carries the phosphoserine modification. Residues 2491 to 2502 show a composition bias toward basic and acidic residues; it reads QDLRRTESDSGL. Residues serine 2563 and serine 2566 each carry the phosphoserine modification. Residues 2568–2683 are a coiled coil; sequence LIEQEKQRSL…RLSQRQTERD (116 aa). A compositionally biased stretch (basic and acidic residues) spans 2665 to 2684; sequence QEQLRREAERLSQRQTERDL. Residues 2665–2813 form a disordered region; sequence QEQLRREAER…VSAEGEEIFC (149 aa). Residues serine 2703, serine 2709, and serine 2728 each carry the phosphoserine modification. Residues 2720-2735 show a composition bias toward polar residues; it reads SLDSELSVSPKRNSIS. Positions 2760–2771 are enriched in low complexity; the sequence is QSQAPASTSAST.

As to quaternary structure, interacts with the cAMP-dependent protein kinase (PKA) holoenzyme and with the regulatory subunit PRKAR2A. Interacts with RHOA. Also interacts with RHOB and RHOC. Identified in a ternary complex with RHOA and PRKAR2A. Identified in a complex with NR3C1 and RHOA. Interacts with BRAF and KSR1. Identified in a complex with BRAF and KSR1. Component of a signaling complex containing at least AKAP13, PKN1, MAPK14, ZAK and MAP2K3. Within this complex, AKAP13 interacts directly with PKN1, which in turn recruits MAPK14, MAP2K3 and ZAK. Interacts (phosphorylated form) with YWHAB and YWHAZ. Interaction with YWHAB inhibits activation of RHOA, interferes with PKN1 binding and activation of MAP kinases. Interacts with GNA12. Interacts with IKBKB. Interacts with ESR1, THRA, PPARA and NME2. Interacts (via the C-terminal domain after the PH domain) with MEF2C and RXRB. Interacts (via the C-terminal domain after the PH domain) with PRKD1. Detected in mammary gland. Detected in heart (at protein level). Expressed as a 5.3 kb transcript in hematopoietic cells, skeletal muscle, lung, heart, estrogen-responsive reproductive tissues, including breast ductal epithelium. Also found in testis and breast cancer cell lines. Predominantly expressed as a 10 kb transcript in the heart and at lower levels in the lung, placenta, kidney, pancreas, skeletal muscle and liver. Transcripts of between 6-9 kb are also expressed in myeloid and lymphoid lineages, a variety of epithelial tissues, and in skeletal muscle.

It is found in the cytoplasm. The protein localises to the cytosol. It localises to the cell cortex. Its subcellular location is the nucleus. The protein resides in the membrane. Functionally, scaffold protein that plays an important role in assembling signaling complexes downstream of several types of G protein-coupled receptors. Activates RHOA in response to signaling via G protein-coupled receptors via its function as Rho guanine nucleotide exchange factor. May also activate other Rho family members. Part of a kinase signaling complex that links ADRA1A and ADRA1B adrenergic receptor signaling to the activation of downstream p38 MAP kinases, such as MAPK11 and MAPK14. Part of a signaling complex that links ADRA1B signaling to the activation of RHOA and IKBKB/IKKB, leading to increased NF-kappa-B transcriptional activity. Part of a RHOA-dependent signaling cascade that mediates responses to lysophosphatidic acid (LPA), a signaling molecule that activates G-protein coupled receptors and potentiates transcriptional activation of the glucocorticoid receptor NR3C1. Part of a signaling cascade that stimulates MEF2C-dependent gene expression in response to lysophosphatidic acid (LPA). Part of a signaling pathway that activates MAPK11 and/or MAPK14 and leads to increased transcription activation of the estrogen receptors ESR1 and ESR2. Part of a signaling cascade that links cAMP and EGFR signaling to BRAF signaling and to PKA-mediated phosphorylation of KSR1, leading to the activation of downstream MAP kinases, such as MAPK1 or MAPK3. Functions as a scaffold protein that anchors cAMP-dependent protein kinase (PKA) and PRKD1. This promotes activation of PRKD1, leading to increased phosphorylation of HDAC5 and ultimately cardiomyocyte hypertrophy. Has no guanine nucleotide exchange activity on CDC42, Ras or Rac. Required for normal embryonic heart development, and in particular for normal sarcomere formation in the developing cardiomyocytes. Plays a role in cardiomyocyte growth and cardiac hypertrophy in response to activation of the beta-adrenergic receptor by phenylephrine or isoproterenol. Required for normal adaptive cardiac hypertrophy in response to pressure overload. Plays a role in osteogenesis. This is A-kinase anchor protein 13 (AKAP13) from Homo sapiens (Human).